A 491-amino-acid polypeptide reads, in one-letter code: Sterol 14-alpha demethylase (491 aa).

The chain crosses the membrane as a helical span at residues 20 to 40 (LWMLSTVALLSILVVSVVINV). Residue Cys430 coordinates heme.

Belongs to the cytochrome P450 family. Requires heme as cofactor.

The protein resides in the endoplasmic reticulum membrane. The enzyme catalyses a 14alpha-methyl steroid + 3 reduced [NADPH--hemoprotein reductase] + 3 O2 = a Delta(14) steroid + formate + 3 oxidized [NADPH--hemoprotein reductase] + 4 H2O + 4 H(+). It carries out the reaction a 14alpha-methyl steroid + reduced [NADPH--hemoprotein reductase] + O2 = a 14alpha-hydroxymethyl steroid + oxidized [NADPH--hemoprotein reductase] + H2O + H(+). The catalysed reaction is a 14alpha-hydroxymethyl steroid + reduced [NADPH--hemoprotein reductase] + O2 = a 14alpha-formyl steroid + oxidized [NADPH--hemoprotein reductase] + 2 H2O + H(+). It catalyses the reaction a 14alpha-formyl steroid + reduced [NADPH--hemoprotein reductase] + O2 = a Delta(14) steroid + formate + oxidized [NADPH--hemoprotein reductase] + H2O + 2 H(+). The enzyme catalyses lanosterol + 3 reduced [NADPH--hemoprotein reductase] + 3 O2 = 4,4-dimethyl-5alpha-cholesta-8,14,24-trien-3beta-ol + formate + 3 oxidized [NADPH--hemoprotein reductase] + 4 H2O + 4 H(+). It carries out the reaction lanosterol + reduced [NADPH--hemoprotein reductase] + O2 = 32-hydroxylanosterol + oxidized [NADPH--hemoprotein reductase] + H2O + H(+). The catalysed reaction is 32-hydroxylanosterol + reduced [NADPH--hemoprotein reductase] + O2 = 32-oxolanosterol + oxidized [NADPH--hemoprotein reductase] + 2 H2O + H(+). It catalyses the reaction 32-oxolanosterol + reduced [NADPH--hemoprotein reductase] + O2 = 4,4-dimethyl-5alpha-cholesta-8,14,24-trien-3beta-ol + formate + oxidized [NADPH--hemoprotein reductase] + H2O + 2 H(+). The enzyme catalyses eburicol + 3 reduced [NADPH--hemoprotein reductase] + 3 O2 = 14-demethyleburicol + formate + 3 oxidized [NADPH--hemoprotein reductase] + 4 H2O + 4 H(+). It carries out the reaction eburicol + reduced [NADPH--hemoprotein reductase] + O2 = 32-hydroxyeburicol + oxidized [NADPH--hemoprotein reductase] + H2O + H(+). The catalysed reaction is 32-hydroxyeburicol + reduced [NADPH--hemoprotein reductase] + O2 = 32-oxoeburicol + oxidized [NADPH--hemoprotein reductase] + 2 H2O + H(+). It catalyses the reaction 32-oxoeburicol + reduced [NADPH--hemoprotein reductase] + O2 = 14-demethyleburicol + formate + oxidized [NADPH--hemoprotein reductase] + H2O + 2 H(+). It functions in the pathway steroid biosynthesis; sterol biosynthesis. In terms of biological role, sterol 14alpha-demethylase, encoded by cyp51A, cyp51B and cyp51C, that plays a critical role in the third module of ergosterol biosynthesis pathway, being ergosterol the major sterol component in fungal membranes that participates in a variety of functions. The third module or late pathway involves the ergosterol synthesis itself through consecutive reactions that mainly occur in the endoplasmic reticulum (ER) membrane. In filamentous fungi, during the initial step of this module, lanosterol (lanosta-8,24-dien-3beta-ol) can be metabolized to eburicol. Sterol 14alpha-demethylase catalyzes the three-step oxidative removal of the 14alpha-methyl group (C-32) of both these sterols in the form of formate, and converts eburicol and lanosterol to 14-demethyleburicol (4,4,24-trimethylergosta-8,14,24(28)-trienol) and 4,4-dimethyl-5alpha-cholesta-8,14,24-trien-3beta-ol, respectively, which are further metabolized by other enzymes in the pathway to ergosterol. Can also use substrates not intrinsic to fungi, such as 24,25-dihydrolanosterol (DHL), producing 4,4'-dimethyl-8,14-cholestadien-3-beta-ol, but at lower rates than the endogenous substrates. Its function is as follows. As a target of azole drugs, plays a crucial role in azole susceptibility. The chain is Sterol 14-alpha demethylase from Aspergillus flavus (strain ATCC 200026 / FGSC A1120 / IAM 13836 / NRRL 3357 / JCM 12722 / SRRC 167).